The following is an 842-amino-acid chain: Histidine biosynthesis trifunctional protein (842 aa).

A phosphoribosyl-AMP cyclohydrolase region spans residues 1 to 275; that stretch reads MTFPLLPAYA…FVVEQTGVGF (275 aa). The tract at residues 276-357 is phosphoribosyl-ATP pyrophosphohydrolase; it reads CHLERTSCFG…FYFALVRCAK (82 aa). The interval 358–842 is histidinol dehydrogenase; that stretch reads YGVTLDEVER…KVRMEKLGLI (485 aa). The interval 380 to 403 is disordered; the sequence is KGDAKPGYTKEQPKEESKPKEVPS. A compositionally biased stretch (basic and acidic residues) spans 390–403; it reads EQPKEESKPKEVPS. Residues Q667 and H670 each contribute to the Zn(2+) site. Residues E736 and H737 contribute to the active site. Zn(2+) contacts are provided by D769 and H828.

It in the C-terminal section; belongs to the histidinol dehydrogenase family. The cofactor is Zn(2+).

The enzyme catalyses 1-(5-phospho-beta-D-ribosyl)-5'-AMP + H2O = 1-(5-phospho-beta-D-ribosyl)-5-[(5-phospho-beta-D-ribosylamino)methylideneamino]imidazole-4-carboxamide. The catalysed reaction is 1-(5-phospho-beta-D-ribosyl)-ATP + H2O = 1-(5-phospho-beta-D-ribosyl)-5'-AMP + diphosphate + H(+). It carries out the reaction L-histidinol + 2 NAD(+) + H2O = L-histidine + 2 NADH + 3 H(+). It functions in the pathway amino-acid biosynthesis; L-histidine biosynthesis; L-histidine from 5-phospho-alpha-D-ribose 1-diphosphate: step 2/9. It participates in amino-acid biosynthesis; L-histidine biosynthesis; L-histidine from 5-phospho-alpha-D-ribose 1-diphosphate: step 3/9. Its pathway is amino-acid biosynthesis; L-histidine biosynthesis; L-histidine from 5-phospho-alpha-D-ribose 1-diphosphate: step 9/9. The polypeptide is Histidine biosynthesis trifunctional protein (HIS4) (Komagataella pastoris (Yeast)).